The following is a 557-amino-acid chain: CCR4-NOT transcription complex subunit 6 (557 aa).

4 LRR repeats span residues 52–73 (HLTA…IAKL), 75–96 (NLVY…LGNM), 98–120 (SLRE…GKLF), and 121–143 (QLQT…YQEP). Positions 153–557 (LLDNLSGTAK…VNGIHLPGRR (405 aa)) are nuclease domain. Position 240 (Glu240) interacts with Mg(2+). Substrate contacts are provided by Glu240, Glu276, His361, and Pro366. Asp412 contacts Mg(2+). Asp412 acts as the Proton donor/acceptor in catalysis. Substrate contacts are provided by Asn414, Asn481, and Phe486.

The protein belongs to the CCR4/nocturin family. Component of the CCR4-NOT complex; distinct complexes seem to exist that differ in the participation of probably mutually exclusive catalytic subunits; the complex contains two deadenylase subunits, CNOT6 or CNOT6L, and CNOT7 or CNOT8. Interacts with CNOT7 and CNOT8. Interacts with UNR. Interacts with ZFP36L1 (via N-terminus). Interacts with ZNF335. It depends on Mg(2+) as a cofactor.

It is found in the cytoplasm. The protein localises to the nucleus. The enzyme catalyses Exonucleolytic cleavage of poly(A) to 5'-AMP.. In terms of biological role, poly(A) nuclease with 3'-5' RNase activity. Catalytic component of the CCR4-NOT complex which is one of the major cellular mRNA deadenylases and is linked to various cellular processes including bulk mRNA degradation, miRNA-mediated repression, translational repression during translational initiation and general transcription regulation. Additional complex functions may be a consequence of its influence on mRNA expression. Involved in mRNA decay mediated by the major-protein-coding determinant of instability (mCRD) of the FOS gene in the cytoplasm. In the presence of ZNF335, enhances ligand-dependent transcriptional activity of nuclear hormone receptors, including RARA. The increase of ligand-dependent ESR1-mediated transcription is much smaller, if any. Mediates cell proliferation and cell survival and prevents cellular senescence. The protein is CCR4-NOT transcription complex subunit 6 (CNOT6) of Homo sapiens (Human).